A 202-amino-acid polypeptide reads, in one-letter code: UPF0301 protein BCG_0069 (202 aa).

It belongs to the UPF0301 (AlgH) family.

This is UPF0301 protein BCG_0069 from Mycobacterium bovis (strain BCG / Pasteur 1173P2).